Consider the following 265-residue polypeptide: Silaffin-1 (265 aa).

An N-terminal signal peptide occupies residues 1-19; the sequence is MKLTAIFPLLFTAVGYCAA. Positions 20–107 are cleaved as a propeptide — acidic; sequence QSIADLAAAN…DSEEEELRIL (88 aa). A disordered region spans residues 37 to 106; it reads SAQLISADSS…EDSEEEELRI (70 aa). The segment covering 51-90 has biased composition (low complexity); the sequence is DSSVESVDAASSDVSGSSVESVDVSGSSLESVDVSGSSLE. Residues 91 to 103 show a composition bias toward acidic residues; that stretch reads SVDDSSEDSEEEE. Residues 108 to 140 form an R1; atypical repeat; sequence SSKKSGSYYSYGTKKSGSYSGYSTKKSASRRIL. Residues 108 to 257 are 7 X 19 AA repeat of S-S-K-K-S-G-S-Y-S-G-S-K-G-S-K-R-R-[IL]-L; it reads SSKKSGSYYS…GSKGSKRRIL (150 aa). N6-poly(methylaminopropyl)lysine is present on Lys-110. Residue Lys-111 is modified to N6,N6-dimethyllysine. The span at 122–133 shows a compositional bias: low complexity; sequence KSGSYSGYSTKK. Residues 122-265 form a disordered region; the sequence is KSGSYSGYST…ILSGGLRGSM (144 aa). The propeptide occupies 137–140; sequence RRIL. The stretch at 141–162 is one R2; atypical repeat; it reads SSKKSGSYSGYSTKKSGSRRIL. Residues 142–155 show a composition bias toward low complexity; it reads SKKSGSYSGYSTKK. N6-poly(methylaminopropyl)lysine is present on Lys-143. Lys-144 is modified (N6,N6-dimethyllysine). Position 154 is an N6-poly(methylaminopropyl)lysine (Lys-154). Lys-155 is modified (N6,N6-dimethyllysine). The propeptide occupies 159–162; the sequence is RRIL. Residues Ser-163 and Ser-164 each carry the phosphoserine modification. The stretch at 163–181 is one R3 repeat; that stretch reads SSKKSGSYSGSKGSKRRIL. Residues 164–174 show a composition bias toward low complexity; that stretch reads SKKSGSYSGSK. Position 165 is an N6-poly(methylaminopropyl)lysine (Lys-165). Lys-166 carries the post-translational modification N6,N6-dimethyllysine. Residues Ser-167, Ser-169, Ser-171, and Ser-173 each carry the phosphoserine modification. N6,N6,N6-trimethyl-5-hydroxylysine is present on Lys-174. The residue at position 176 (Ser-176) is a Phosphoserine. Lys-177 is subject to N6-poly(methylaminopropyl)lysine. A propeptide spanning residues 178–181 is cleaved from the precursor; it reads RRIL. Ser-182 and Ser-183 each carry phosphoserine. One copy of the R4 repeat lies at 182–200; that stretch reads SSKKSGSYSGSKGSKRRNL. Low complexity predominate over residues 183–193; that stretch reads SKKSGSYSGSK. Lys-184 is modified (N6-poly(methylaminopropyl)lysine). Lys-185 is subject to N6,N6-dimethyllysine. Residues Ser-186, Ser-188, Ser-190, and Ser-192 each carry the phosphoserine modification. Position 193 is an N6,N6,N6-trimethyl-5-hydroxylysine (Lys-193). Ser-195 carries the post-translational modification Phosphoserine. Lys-196 carries the post-translational modification N6-poly(methylaminopropyl)lysine. The propeptide occupies 197 to 200; that stretch reads RRNL. Phosphoserine occurs at positions 201 and 202. An R5 repeat occupies 201–219; the sequence is SSKKSGSYSGSKGSKRRIL. Residues 202–212 show a composition bias toward low complexity; that stretch reads SKKSGSYSGSK. The residue at position 203 (Lys-203) is an N6-poly(methylaminopropyl)lysine. An N6,N6-dimethyllysine modification is found at Lys-204. Ser-205, Ser-207, Ser-209, and Ser-211 each carry phosphoserine. N6,N6,N6-trimethyl-5-hydroxylysine is present on Lys-212. Residue Ser-214 is modified to Phosphoserine. Lys-215 carries the N6-poly(methylaminopropyl)lysine modification. Residues 216 to 219 constitute a propeptide that is removed on maturation; sequence RRIL. Residues Ser-220 and Ser-221 each carry the phosphoserine modification. An R6 repeat occupies 220–238; it reads SSKKSGSYSGSKGSKRRNL. Over residues 221 to 231 the composition is skewed to low complexity; the sequence is SKKSGSYSGSK. The residue at position 222 (Lys-222) is an N6-poly(methylaminopropyl)lysine. The residue at position 223 (Lys-223) is an N6,N6-dimethyllysine. 4 positions are modified to phosphoserine: Ser-224, Ser-226, Ser-228, and Ser-230. Lys-231 is modified (N6,N6,N6-trimethyl-5-hydroxylysine). At Ser-233 the chain carries Phosphoserine. At Lys-234 the chain carries N6-poly(methylaminopropyl)lysine. The propeptide occupies 235 to 238; it reads RRNL. 2 positions are modified to phosphoserine: Ser-239 and Ser-240. The R7 repeat unit spans residues 239–257; sequence SSKKSGSYSGSKGSKRRIL. Residues 240–250 show a composition bias toward low complexity; sequence SKKSGSYSGSK. Position 241 is an N6-poly(methylaminopropyl)lysine (Lys-241). N6,N6-dimethyllysine is present on Lys-242. Residues Ser-243, Ser-245, Ser-247, and Ser-249 each carry the phosphoserine modification. Lys-250 carries the N6,N6,N6-trimethyl-5-hydroxylysine modification. Ser-252 is subject to Phosphoserine. Lys-253 bears the N6-poly(methylaminopropyl)lysine mark. Residues 254–265 constitute a propeptide that is removed on maturation; that stretch reads RRILSGGLRGSM.

Silaffin-1A peptides form large aggregates via electrostatic interactions due to intermolecular interactions between the negatively charged phosphate groups and the polyamine moieties. N6-polymethylaminopropylated. Two lysine residues of each peptide bears 6 to 11 repeats of methyl-propylamine, which gives a possible template for nucleation, and may also control the silica colloid size within the silica deposition vesicle (SDV). Post-translationally, phosphorylated. All serine residues of the Silaffin-1A1 peptide are phosphorylated. Only minor amounts of the Silaffin-1A2 peptide are phosphorylated. Phosphorylation is essential for the activity. It may represent a source of anions required for silica formation of diatoms.

Functionally, catalyzes the polymerization of silica spheres from a silicilic acid solution. It therefore plays a central role in the formation of silica cell wall of diatoms. The protein is Silaffin-1 (SIL1) of Cylindrotheca fusiformis (Marine diatom).